Reading from the N-terminus, the 578-residue chain is Transcriptional regulator SKO1 (578 aa).

A compositionally biased stretch (polar residues) spans 39 to 50; the sequence is NDAISDVNSVAT. Disordered regions lie at residues 39–169, 176–195, 287–311, and 342–489; these read NDAI…TQQP, MSGM…RSGL, LQQD…QPQP, and ESKP…RKNF. Over residues 51–62 the composition is skewed to low complexity; it reads SGSSINNGSSSN. Composition is skewed to polar residues over residues 70-80 and 107-132; these read NISSVNQQQGV and GGTT…TLGS. Residues 154–169 show a composition bias toward low complexity; that stretch reads PQQQQQPQQQQQTQQP. Residues 184-193 show a composition bias toward polar residues; that stretch reads LTPNESNIRS. Composition is skewed to low complexity over residues 287–296 and 356–370; these read LQQDQSSQAL and DLNP…TTTA. Residues 384–402 are compositionally biased toward basic residues; sequence KKAKVAKGKKKEPKSKSKG. Basic and acidic residues predominate over residues 415-443; it reads KPEDENVPGKENGNEENHKVEAESKEEHL. Positions 445–471 are enriched in low complexity; it reads NGNETTTTKTNNTGNSSNGTTTTTTTK. The 64-residue stretch at 483-546 folds into the bZIP domain; it reads DDKRKNFLER…LLLKEKHNIQ (64 aa). Positions 485–505 are basic motif; sequence KRKNFLERNRVAASKCRQRKK. The tract at residues 508–515 is leucine-zipper; that stretch reads IQKMEEEL.

This sequence belongs to the bZIP family. Post-translationally, undergoes HOG1-dependent phosphorylation after osmotic stress.

It is found in the nucleus. Functionally, transcription repressor involved in cell wall damage response. Regulates 79 caspofungin-responsive genes, including several cell wall biogenesis genes such as CRH11, MNN2, and SKN1. Also controls the expression of pathogenesis and hyphal related genes and represses the yeast-to-hypha transition. Mediates the response to oxidative stress. The sequence is that of Transcriptional regulator SKO1 (SKO1) from Candida albicans (strain SC5314 / ATCC MYA-2876) (Yeast).